Here is a 293-residue protein sequence, read N- to C-terminus: Nucleotide-binding protein Dole_0503 (293 aa).

11–18 (GLSGSGKS) provides a ligand contact to ATP. Residue 62–65 (DLRE) coordinates GTP.

This sequence belongs to the RapZ-like family.

In terms of biological role, displays ATPase and GTPase activities. This Desulfosudis oleivorans (strain DSM 6200 / JCM 39069 / Hxd3) (Desulfococcus oleovorans) protein is Nucleotide-binding protein Dole_0503.